The sequence spans 384 residues: 23S rRNA (uracil(747)-C(5))-methyltransferase RlmC (384 aa).

Residues C7, C15, C18, and C94 each coordinate [4Fe-4S] cluster. S-adenosyl-L-methionine contacts are provided by Q219, F248, E269, and N316. C343 acts as the Nucleophile in catalysis.

This sequence belongs to the class I-like SAM-binding methyltransferase superfamily. RNA M5U methyltransferase family. RlmC subfamily.

It carries out the reaction uridine(747) in 23S rRNA + S-adenosyl-L-methionine = 5-methyluridine(747) in 23S rRNA + S-adenosyl-L-homocysteine + H(+). Functionally, catalyzes the formation of 5-methyl-uridine at position 747 (m5U747) in 23S rRNA. The chain is 23S rRNA (uracil(747)-C(5))-methyltransferase RlmC from Shewanella sp. (strain MR-4).